The sequence spans 223 residues: Small ribosomal subunit protein uS3 (223 aa).

The KH type-2 domain maps to I39 to K108.

The protein belongs to the universal ribosomal protein uS3 family. As to quaternary structure, part of the 30S ribosomal subunit. Forms a tight complex with proteins S10 and S14.

Functionally, binds the lower part of the 30S subunit head. Binds mRNA in the 70S ribosome, positioning it for translation. This Clostridium kluyveri (strain NBRC 12016) protein is Small ribosomal subunit protein uS3.